We begin with the raw amino-acid sequence, 388 residues long: LL-diaminopimelate aminotransferase (388 aa).

The substrate site is built by Y13, G38, K102, Y126, and N176. Pyridoxal 5'-phosphate contacts are provided by residues 101–102 (SK), Y126, N176, Y207, and 235–237 (SLS). N6-(pyridoxal phosphate)lysine is present on K238. A pyridoxal 5'-phosphate-binding site is contributed by R246. R364 is a substrate binding site.

Belongs to the class-I pyridoxal-phosphate-dependent aminotransferase family. LL-diaminopimelate aminotransferase subfamily. As to quaternary structure, homodimer. Pyridoxal 5'-phosphate serves as cofactor.

It carries out the reaction (2S,6S)-2,6-diaminopimelate + 2-oxoglutarate = (S)-2,3,4,5-tetrahydrodipicolinate + L-glutamate + H2O + H(+). The protein operates within amino-acid biosynthesis; L-lysine biosynthesis via DAP pathway; LL-2,6-diaminopimelate from (S)-tetrahydrodipicolinate (aminotransferase route): step 1/1. Functionally, involved in the synthesis of meso-diaminopimelate (m-DAP or DL-DAP), required for both lysine and peptidoglycan biosynthesis. Catalyzes the direct conversion of tetrahydrodipicolinate to LL-diaminopimelate. In Dehalococcoides mccartyi (strain ATCC BAA-2266 / KCTC 15142 / 195) (Dehalococcoides ethenogenes (strain 195)), this protein is LL-diaminopimelate aminotransferase.